The primary structure comprises 209 residues: Yop proteins translocation protein K (209 aa).

Belongs to an operon involved in the translocation of Yop proteins across the bacterial membranes or in the specific control of this function. The chain is Yop proteins translocation protein K (yscK) from Yersinia enterocolitica.